An 873-amino-acid polypeptide reads, in one-letter code: Coatomer subunit gamma-2 (873 aa).

Basic and acidic residues predominate over residues 1–11 (MIKKFDKKDEE). The interval 1 to 21 (MIKKFDKKDEESGSGSNPFQN) is disordered. HEAT repeat units follow at residues 64–101 (TEAT…ISED), 283–320 (RELA…KHPS), 321–355 (AVTA…GSES), 356–392 (SVDR…KYPR), 394–430 (HSAM…ENPE), and 467–504 (PQPS…QNDD).

It belongs to the COPG family. As to quaternary structure, oligomeric complex.

It localises to the cytoplasm. Its subcellular location is the golgi apparatus membrane. The protein localises to the cytoplasmic vesicle. It is found in the COPI-coated vesicle membrane. Its function is as follows. The coatomer is a cytosolic protein complex that binds to dilysine motifs and reversibly associates with Golgi non-clathrin-coated vesicles, which further mediate biosynthetic protein transport from the ER, via the Golgi up to the trans Golgi network. Coatomer complex is required for budding from Golgi membranes, and is essential for the retrograde Golgi-to-ER transport of dilysine-tagged proteins. This Takifugu rubripes (Japanese pufferfish) protein is Coatomer subunit gamma-2 (copg2).